Reading from the N-terminus, the 257-residue chain is Imidazole glycerol phosphate synthase subunit HisF (257 aa).

Active-site residues include Asp11 and Asp130.

It belongs to the HisA/HisF family. As to quaternary structure, heterodimer of HisH and HisF.

Its subcellular location is the cytoplasm. The catalysed reaction is 5-[(5-phospho-1-deoxy-D-ribulos-1-ylimino)methylamino]-1-(5-phospho-beta-D-ribosyl)imidazole-4-carboxamide + L-glutamine = D-erythro-1-(imidazol-4-yl)glycerol 3-phosphate + 5-amino-1-(5-phospho-beta-D-ribosyl)imidazole-4-carboxamide + L-glutamate + H(+). It functions in the pathway amino-acid biosynthesis; L-histidine biosynthesis; L-histidine from 5-phospho-alpha-D-ribose 1-diphosphate: step 5/9. IGPS catalyzes the conversion of PRFAR and glutamine to IGP, AICAR and glutamate. The HisF subunit catalyzes the cyclization activity that produces IGP and AICAR from PRFAR using the ammonia provided by the HisH subunit. The polypeptide is Imidazole glycerol phosphate synthase subunit HisF (Vibrio campbellii (strain ATCC BAA-1116)).